We begin with the raw amino-acid sequence, 345 residues long: MAASDEVNLIESRTVVPLNTWVLISNFKVAYNILRRPDGTFNRHLAEYLDRKVTANANPVDGVFSFDVLIDRRINLLSRVYRPAYADQEQPPSILDLEKPVDGDIVPVILFFHGGSFAHSSANSAIYDTLCRRLVGLCKCVVVSVNYRRAPENPYPCAYDDGWIALNWVNSRSWLKSKKDSKVHIFLAGDSSGGNIAHNVALRAGESGIDVLGNILLNPMFGGNERTESEKSLDGKYFVTVRDRDWYWKAFLPEGEDREHPACNPFSPRGKSLEGVSFPKSLVVVAGLDLIRDWQLAYAEGLKKAGQEVKLMHLEKATVGFYLLPNNNHFHNVMDEISAFVNAEC.

An N-acetylalanine modification is found at A2. Positions 113–115 (HGG) match the Involved in the stabilization of the negatively charged intermediate by the formation of the oxyanion hole motif. Gibberellin A4-binding positions include 115–116 (GS), Y127, and S191. Residues S116, Y127, S191, and F238 each coordinate gibberellin A3. Residue S191 is part of the active site. D289 is a catalytic residue. G320 contributes to the gibberellin A4 binding site. A gibberellin A3-binding site is contributed by G320.

Belongs to the 'GDXG' lipolytic enzyme family. As to quaternary structure, interacts (via N-terminus) with the DELLA proteins GAI, RGA, RGL1, RGL2 and RGL3 (via N-terminus) in a GA-dependent manner. Widely expressed.

It is found in the nucleus. Functionally, functions as a soluble gibberellin (GA) receptor. GA is an essential hormone that regulates growth and development in plants. Binds with high affinity the biologically active gibberellin GA4, but has no affinity for the biologically inactive GAs. In response to GA, interacts with specific DELLA proteins, known as repressors of GA-induced growth, and targets them for degradation via proteasome. Seems to be required for GA signaling that controls root growth, seed germination, stem elongation and flower development. Partially redundant with GID1B and GID1C. The polypeptide is Gibberellin receptor GID1A (GID1A) (Arabidopsis thaliana (Mouse-ear cress)).